Consider the following 293-residue polypeptide: Tumor necrosis factor receptor superfamily member 13B (293 aa).

The Extracellular segment spans residues 1 to 165; that stretch reads MSGLGRSRRG…SADQVALVYS (165 aa). 2 TNFR-Cys repeats span residues 33–67 and 70–104; these read SCPEEQYWDPLLGTCMSCKTICNHQSQRTCAAFCR and SCRKEQGKFYDHLLRDCISCASICGQHPKQCAYFC. 6 cysteine pairs are disulfide-bonded: Cys34–Cys47, Cys50–Cys62, Cys54–Cys66, Cys71–Cys86, Cys89–Cys100, and Cys93–Cys104. The disordered stretch occupies residues 115–146; the sequence is PPELRRQRSGEVENNSDNSGRYQGLEHRGSEA. The span at 126–135 shows a compositional bias: polar residues; the sequence is VENNSDNSGR. N-linked (GlcNAc...) asparagine glycosylation is present at Asn128. Residues 166-186 traverse the membrane as a helical; Signal-anchor for type III membrane protein segment; sequence TLGLCLCAVLCCFLVAVACFL. Over 187-293 the chain is Cytoplasmic; it reads KKRGDPCSCQ…VPAQEGGPGA (107 aa). A disordered region spans residues 192-226; sequence PCSCQPRSRPRQSPAKSSQDHAMEAGSPVSTSPEP.

As to quaternary structure, binds TRAF2, TRAF5 and TRAF6. Binds the NH2-terminal domain of CAMLG with its C-terminus. In terms of tissue distribution, highly expressed in spleen, thymus, small intestine and peripheral blood leukocytes. Expressed in resting B-cells and activated T-cells, but not in resting T-cells.

The protein resides in the membrane. In terms of biological role, receptor for TNFSF13/APRIL and TNFSF13B/TALL1/BAFF/BLYS that binds both ligands with similar high affinity. Mediates calcineurin-dependent activation of NF-AT, as well as activation of NF-kappa-B and AP-1. Involved in the stimulation of B- and T-cell function and the regulation of humoral immunity. The chain is Tumor necrosis factor receptor superfamily member 13B (TNFRSF13B) from Homo sapiens (Human).